Here is a 567-residue protein sequence, read N- to C-terminus: Lipase maturation factor 1 (567 aa).

The interval 1 to 39 (MRPDSPTMAAPAESLRRRKTGYSDPEPESPPAPGRGPAG) is disordered. The Cytoplasmic segment spans residues 1–49 (MRPDSPTMAAPAESLRRRKTGYSDPEPESPPAPGRGPAGSPAHLHTGTF). A helical transmembrane segment spans residues 50-72 (WLTRIVLLKALAFVYFVAFLVAF). Topologically, residues 73–127 (HQNKQLIGDRGLLPCRVFLKNFQQYFQDRTSWEVFSYMPTILWLMDWSDMNSNLD) are lumenal. The helical transmembrane segment at 128–151 (LLALLGLGISSFVLITGCANMLLM) threads the bilayer. Over 152–207 (AALWGLYMSLVNVGHVWYSFGWESQLLETGFLGIFLCPLWTLSRLPQHTPTSRIVL) the chain is Cytoplasmic. A helical transmembrane segment spans residues 208–221 (WGFRWLIFRIMLGA). Topologically, residues 222–292 (GLIKIRGDRC…LGRRACIIHG (71 aa)) are lumenal. A helical transmembrane segment spans residues 293-321 (VLQILFQAVLIVSGNLSFLNWLTMVPSLA). Topologically, residues 322–367 (CFDDATLGFLFPSGPGSLKDRVLQMQRDIRGARPEPRFGSVVRRAA) are cytoplasmic. A helical membrane pass occupies residues 368 to 388 (NVSLGVLLAWLSVPVVLNLLS). Over 389–567 (SRQVMNTHFN…DRGWPLPGPL (179 aa)) the chain is Lumenal.

The protein belongs to the lipase maturation factor family. Interacts with LPL and SEL1L.

Its subcellular location is the endoplasmic reticulum membrane. Functionally, involved in the maturation of specific proteins in the endoplasmic reticulum. Required for maturation and transport of active lipoprotein lipase (LPL) through the secretory pathway. Each LMF1 molecule chaperones 50 or more molecules of LPL. The chain is Lipase maturation factor 1 (LMF1) from Homo sapiens (Human).